A 379-amino-acid polypeptide reads, in one-letter code: DnaJ homolog subfamily B member 14 (379 aa).

At 1–244 (MEGNRDEAEK…GHEREEERGD (244 aa)) the chain is on the cytoplasmic side. A disordered region spans residues 55 to 94 (STAGNSPHCRKPSGGGDQSKPNCTKDSSSGSGESGKGYTK). Positions 108-172 (NYYEVLGVTK…EKRKQYDLTG (65 aa)) constitute a J domain. The disordered stretch occupies residues 221 to 241 (GRAGYSNQHQHRHSGHEREEE). Residues 245–265 (GGFSVFIQLMPIIVLILVSLL) form a helical membrane-spanning segment. The Lumenal portion of the chain corresponds to 266 to 379 (SQLMVSNPPY…ERLTSIYKGG (114 aa)).

Belongs to the DnaJ family. DNAJB12/DNAJB14 subfamily. In terms of assembly, interacts (via J domain) with HSPA8/Hsc70. Forms a multiprotein complex, at least composed of DNAJB12, DNAJB14, HSPA8/Hsc70 and SGTA; interaction with DNAJB14 and HSPA8/Hsc70 is direct.

The protein resides in the endoplasmic reticulum membrane. Its subcellular location is the nucleus membrane. Its function is as follows. Acts as a co-chaperone with HSPA8/Hsc70; required to promote protein folding and trafficking, prevent aggregation of client proteins, and promote unfolded proteins to endoplasmic reticulum-associated degradation (ERAD) pathway. Acts by determining HSPA8/Hsc70's ATPase and polypeptide-binding activities. Can also act independently of HSPA8/Hsc70: together with DNAJB12, acts as a chaperone that promotes maturation of potassium channels KCND2 and KCNH2 by stabilizing nascent channel subunits and assembling them into tetramers. While stabilization of nascent channel proteins is dependent on HSPA8/Hsc70, the process of oligomerization of channel subunits is independent of HSPA8/Hsc70. When overexpressed, forms membranous structures together with DNAJB12 and HSPA8/Hsc70 within the nucleus; the role of these structures, named DJANGOs, is still unclear. The chain is DnaJ homolog subfamily B member 14 (DNAJB14) from Bos taurus (Bovine).